A 207-amino-acid polypeptide reads, in one-letter code: Peptidyl-tRNA hydrolase (207 aa).

Position 30 (tyrosine 30) interacts with tRNA. Histidine 35 (proton acceptor) is an active-site residue. The tRNA site is built by tyrosine 81, asparagine 83, and asparagine 129.

This sequence belongs to the PTH family. As to quaternary structure, monomer.

The protein localises to the cytoplasm. The catalysed reaction is an N-acyl-L-alpha-aminoacyl-tRNA + H2O = an N-acyl-L-amino acid + a tRNA + H(+). In terms of biological role, hydrolyzes ribosome-free peptidyl-tRNAs (with 1 or more amino acids incorporated), which drop off the ribosome during protein synthesis, or as a result of ribosome stalling. Its function is as follows. Catalyzes the release of premature peptidyl moieties from peptidyl-tRNA molecules trapped in stalled 50S ribosomal subunits, and thus maintains levels of free tRNAs and 50S ribosomes. The chain is Peptidyl-tRNA hydrolase from Bordetella avium (strain 197N).